Here is a 351-residue protein sequence, read N- to C-terminus: Alanine racemase (351 aa).

Residue K34 is the Proton acceptor; specific for D-alanine of the active site. At K34 the chain carries N6-(pyridoxal phosphate)lysine. Position 126 (R126) interacts with substrate. Catalysis depends on Y248, which acts as the Proton acceptor; specific for L-alanine. Position 296 (M296) interacts with substrate.

It belongs to the alanine racemase family. The cofactor is pyridoxal 5'-phosphate.

The catalysed reaction is L-alanine = D-alanine. It participates in amino-acid biosynthesis; D-alanine biosynthesis; D-alanine from L-alanine: step 1/1. In terms of biological role, catalyzes the interconversion of L-alanine and D-alanine. May also act on other amino acids. This Deinococcus radiodurans (strain ATCC 13939 / DSM 20539 / JCM 16871 / CCUG 27074 / LMG 4051 / NBRC 15346 / NCIMB 9279 / VKM B-1422 / R1) protein is Alanine racemase (alr).